We begin with the raw amino-acid sequence, 172 residues long: RTX-I toxin-activating lysine-acyltransferase ApxIC (172 aa).

Residues H24 and D93 contribute to the active site.

The protein belongs to the RTX toxin acyltransferase family. As to quaternary structure, homodimer.

The protein localises to the cytoplasm. The catalysed reaction is a fatty acyl-[ACP] + L-lysyl-[protein] = N(6)-(fatty acyl)-L-lysyl-[protein] + holo-[ACP] + H(+). Protein-lysine acyltransferase that catalyzes fatty acylation of the protoxin, thereby converting it to the active toxin. The chain is RTX-I toxin-activating lysine-acyltransferase ApxIC from Actinobacillus pleuropneumoniae (Haemophilus pleuropneumoniae).